The primary structure comprises 732 residues: MTSNLIKFDDQNKVFHLHNKQISYLLSIEDGGTLSHLYFGGAVKNYNNQLKYPRLDRGFSGNLPESLDRTFSRDSLPKEYSSAGEMDFHTPATIVRNPDGSNALFLAYKSYKIEDGKPDLKGLPHSWTKEDDEAQTLIVTLEDKVSKLEYDLLYTIYRDRPVIVRSVQVHNHGEEAVYLEKVASMQMDYVDKDFEVITLPGAHANERRVQRENIGQGIKVFSSYRGTSSHQMNPFMALVDHDTNEFMGEAYGFALAYSGNHKFEVERDQFGQIHVNTGINDYNFKWKLNPNEEFQTPEVLMVYSDQGLNKMSQAFHSLIHERIMRSKFKDQIRPVLVNNWEATYFDFNEDKLKTIVDKAKKLGLEMFVLDDGWFGHRDDDNSSLGDWKVYKKKFPNGLGHFADYVHEQGLKFGLWFEPEMISYESNLYKEHPDYLMHVPGRKPCPSRNQYVLELGRKEVRDNIFEQMVKILDSKKIDYIKWDMNRSLSDIYESDLPADQQGEAYHRYVLGYYDLLNKLVTRYPDILFEGCSGGGGRFDVGQAYYTPQIWASDNTDAIERLKIQYGTSLVYPQSMMTSHVSVSPNEQNGRITPFNTRGAVAMWGDLGYELDLTKMSDEESDQVVKQVTEYKKIREVTQFGTLYRLKASASNQCAWMMVDSNKNEAVVTVVNVMAHAQPYCTKTKLAGLDPDKRYKNLETDEVFGGDELMHLGFYDPIERGDFKAKMYHFKAIN.

Substrate contacts are provided by residues 370-371 (DD), Trp415, Arg447, 480-484 (KWDMN), 530-533 (CSGG), and Asp552. Asp482 serves as the catalytic Nucleophile. Residue Asp552 is the Proton donor of the active site.

The protein belongs to the glycosyl hydrolase 36 family. As to quaternary structure, homotetramer.

The catalysed reaction is Hydrolysis of terminal, non-reducing alpha-D-galactose residues in alpha-D-galactosides, including galactose oligosaccharides, galactomannans and galactolipids.. In terms of biological role, hydrolyzes the short-chain alpha-galactosaccharide raffinose. The polypeptide is Alpha-galactosidase Mel36A (Lactobacillus acidophilus (strain ATCC 700396 / NCK56 / N2 / NCFM)).